The chain runs to 268 residues: Hydroxyethylthiazole kinase (268 aa).

M45 is a substrate binding site. R121 and T167 together coordinate ATP. Residue G194 coordinates substrate.

It belongs to the Thz kinase family. Requires Mg(2+) as cofactor.

The catalysed reaction is 5-(2-hydroxyethyl)-4-methylthiazole + ATP = 4-methyl-5-(2-phosphooxyethyl)-thiazole + ADP + H(+). Its pathway is cofactor biosynthesis; thiamine diphosphate biosynthesis; 4-methyl-5-(2-phosphoethyl)-thiazole from 5-(2-hydroxyethyl)-4-methylthiazole: step 1/1. In terms of biological role, catalyzes the phosphorylation of the hydroxyl group of 4-methyl-5-beta-hydroxyethylthiazole (THZ). This Bacillus thuringiensis (strain Al Hakam) protein is Hydroxyethylthiazole kinase.